We begin with the raw amino-acid sequence, 888 residues long: Calcium-transporting ATPase 1 (888 aa).

Transmembrane regions (helical) follow at residues 53–75, 79–97, 246–266, and 283–303; these read IFAQ…SAFV, ADAS…IGVV, VGKY…LIGF, and AVAA…AIGV. Residues valine 284, alanine 285, isoleucine 287, and glutamate 289 each contribute to the Ca(2+) site. Aspartate 331 serves as the catalytic 4-aspartylphosphate intermediate. 6 helical membrane passes run 675–695, 703–723, 747–767, 791–811, 831–851, and 865–885; these read ILFL…AILL, PIHI…SLGV, VPFL…AFIA, LLHA…VHSF, LVFS…IPPL, and WGFV…IKLA. Ca(2+) contacts are provided by asparagine 710 and aspartate 714.

The protein belongs to the cation transport ATPase (P-type) (TC 3.A.3) family. Type IIA subfamily.

It is found in the cell membrane. It carries out the reaction Ca(2+)(in) + ATP + H2O = Ca(2+)(out) + ADP + phosphate + H(+). Its activity is regulated as follows. Inhibited by cyclopiazonic acid (CPA). In terms of biological role, catalyzes the hydrolysis of ATP coupled with the transport of calcium. This chain is Calcium-transporting ATPase 1, found in Bacillus cereus (strain ATCC 10987 / NRS 248).